A 1234-amino-acid polypeptide reads, in one-letter code: DNA-directed RNA polymerase I subunit RPA2 (1234 aa).

The segment at 1119–1150 adopts a C4-type zinc-finger fold; sequence CRQCGSFLSTQPTVSPFIGKRKAVSTVRCRNC.

Belongs to the RNA polymerase beta chain family. Component of the RNA polymerase I (Pol I) complex consisting of 14 subunits.

The protein resides in the nucleus. Its subcellular location is the nucleolus. The catalysed reaction is RNA(n) + a ribonucleoside 5'-triphosphate = RNA(n+1) + diphosphate. In terms of biological role, DNA-dependent RNA polymerase catalyzes the transcription of DNA into RNA using the four ribonucleoside triphosphates as substrates. Second largest core component of RNA polymerase I which synthesizes ribosomal RNA precursors. Proposed to contribute to the polymerase catalytic activity and forms the polymerase active center together with the largest subunit. Pol I is composed of mobile elements and RPA2 is part of the core element with the central large cleft and probably a clamp element that moves to open and close the cleft. This chain is DNA-directed RNA polymerase I subunit RPA2 (acr-2), found in Neurospora crassa (strain ATCC 24698 / 74-OR23-1A / CBS 708.71 / DSM 1257 / FGSC 987).